The chain runs to 105 residues: uncharacterized protein (105 aa).

The chain crosses the membrane as a helical span at residues 4–26 (TQILLILFVGILVTTPHDIFIII).

It localises to the membrane. This is an uncharacterized protein from Rickettsia conorii (strain ATCC VR-613 / Malish 7).